The primary structure comprises 89 residues: Cornifin-A (89 aa).

The interval 1–29 (MNSQQQKQPCTPPPQPQQQQVKQPCQPPP) is disordered. 8 repeat units span residues 3 to 14 (SQQQKQPCTPPP), 18 to 29 (QQQVKQPCQPPP), 31 to 38 (EPCIPKTK), 39 to 46 (EPCHPKVP), 47 to 54 (EPCHPKVP), 55 to 62 (EPCQPKVP), 63 to 70 (EPCQPKVP), and 71 to 78 (EPCPSTVT). The interval 3–29 (SQQQKQPCTPPPQPQQQQVKQPCQPPP) is 2 X 12 AA approximate repeats. Residues 31 to 78 (EPCIPKTKEPCHPKVPEPCHPKVPEPCQPKVPEPCQPKVPEPCPSTVT) are 6 X 8 AA approximate tandem repeats. Residues 68–89 (KVPEPCPSTVTPAPAQQKTKQK) form a disordered region. Positions 75 to 89 (STVTPAPAQQKTKQK) are enriched in polar residues.

Belongs to the cornifin (SPRR) family.

Its subcellular location is the cytoplasm. Its function is as follows. Cross-linked envelope protein of keratinocytes. It is a keratinocyte protein that first appears in the cell cytosol, but ultimately becomes cross-linked to membrane proteins by transglutaminase. All that results in the formation of an insoluble envelope beneath the plasma membrane. The chain is Cornifin-A (SPRR1A) from Homo sapiens (Human).